The primary structure comprises 587 residues: Tyrosine-protein kinase transforming protein Src (587 aa).

The interval 1-58 (MGSSKSKPKDPSQRRRSLEPPDSTHHGGFPASQTPNKTAAPDTHRTPSRSFGTVATEP) is disordered. Gly-2 is lipidated: N-myristoyl glycine; by host. Positions 7-25 (KPKDPSQRRRSLEPPDSTH) are enriched in basic and acidic residues. Positions 81–142 (GGVTTFVALY…PSNYVAPSDS (62 aa)) constitute an SH3 domain. The SH2 domain maps to 148–245 (WYFGKITRRE…GLCHRLTNVC (98 aa)). The Protein kinase domain occupies 267–520 (LRLEVKLGQG…YLQAFLEDYF (254 aa)). Residues 273–281 (LGQGCFGEV) and Lys-295 contribute to the ATP site. Asp-386 acts as the Proton acceptor in catalysis. Position 416 is a phosphotyrosine; by autocatalysis (Tyr-416).

Belongs to the protein kinase superfamily. Tyr protein kinase family. SRC subfamily. Post-translationally, the phosphorylated form is termed pp60v-src.

The catalysed reaction is L-tyrosyl-[protein] + ATP = O-phospho-L-tyrosyl-[protein] + ADP + H(+). Its function is as follows. This phosphoprotein, required for both the initiation and the maintenance of neoplastic transformation, is a protein kinase that catalyzes the phosphorylation of tyrosine residues in vitro. The protein is Tyrosine-protein kinase transforming protein Src (V-SRC) of Galliformes.